We begin with the raw amino-acid sequence, 214 residues long: Adenylate kinase (214 aa).

Position 10–15 (10–15 (GAGKGT)) interacts with ATP. The interval 30–59 (STGDMLRAAIKAGTELGKQAKAVIDAGQLV) is NMP. AMP is bound by residues T31, R36, 57 to 59 (QLV), 85 to 88 (GFPR), and Q92. The segment at 122-159 (GRRAHLPSGRTYHVVYNPPKVEGKDDVTGEDLVIREDD) is LID. Residues R123 and 132–133 (TY) contribute to the ATP site. 2 residues coordinate AMP: R156 and R167. K200 is an ATP binding site.

This sequence belongs to the adenylate kinase family. In terms of assembly, monomer.

Its subcellular location is the cytoplasm. It carries out the reaction AMP + ATP = 2 ADP. It functions in the pathway purine metabolism; AMP biosynthesis via salvage pathway; AMP from ADP: step 1/1. Its function is as follows. Catalyzes the reversible transfer of the terminal phosphate group between ATP and AMP. Plays an important role in cellular energy homeostasis and in adenine nucleotide metabolism. This chain is Adenylate kinase, found in Vibrio cholerae serotype O1 (strain ATCC 39541 / Classical Ogawa 395 / O395).